Consider the following 123-residue polypeptide: UPF0342 protein LAR_1202 (123 aa).

It belongs to the UPF0342 family.

This Limosilactobacillus reuteri subsp. reuteri (strain JCM 1112) (Lactobacillus reuteri) protein is UPF0342 protein LAR_1202.